The primary structure comprises 496 residues: Beta-amylase (496 aa).

Residues aspartate 54, histidine 94, and aspartate 102 each contribute to the substrate site. Glutamate 187 (proton donor) is an active-site residue. 3 residues coordinate substrate: lysine 296, histidine 301, and threonine 343. The Proton acceptor role is filled by glutamate 381. Residues 382-383 and arginine 421 each bind substrate; that span reads NA. The tract at residues 455 to 496 is disordered; that stretch reads YNHGIPPLKRSGPKIPDDVLNEATKPIPPFPWDSETDMKVDG.

The protein belongs to the glycosyl hydrolase 14 family.

It catalyses the reaction Hydrolysis of (1-&gt;4)-alpha-D-glucosidic linkages in polysaccharides so as to remove successive maltose units from the non-reducing ends of the chains.. This chain is Beta-amylase (BMY1), found in Medicago sativa (Alfalfa).